Consider the following 1005-residue polypeptide: Regulator of telomere elongation helicase 1 homolog (1005 aa).

In terms of domain architecture, Helicase ATP-binding spans 7–322 (AGIPVHFPFE…KEMLLELEKA (316 aa)). Residue 42–49 (SPTGTGKT) coordinates ATP. Residues cysteine 145, cysteine 163, cysteine 172, and cysteine 208 each coordinate [4Fe-4S] cluster. The DEAH box signature appears at 251–254 (DEAH). Position 876 is a phosphothreonine (threonine 876). Residues 893-917 (NGPLKTEPSEPATTSSSFCPTPAQS) form a disordered region.

It belongs to the helicase family. RAD3/XPD subfamily.

The protein resides in the nucleus. It catalyses the reaction ATP + H2O = ADP + phosphate + H(+). In terms of biological role, a probable ATP-dependent DNA helicase implicated in DNA repair and the maintenance of genomic stability. Acts as an anti-recombinase to counteract toxic recombination and limit crossover during meiosis. Regulates meiotic recombination and crossover homeostasis by physically dissociating strand invasion events and thereby promotes noncrossover repair by meiotic synthesis dependent strand annealing (SDSA) as well as disassembly of D loop recombination intermediates. The polypeptide is Regulator of telomere elongation helicase 1 homolog (Drosophila virilis (Fruit fly)).